Reading from the N-terminus, the 374-residue chain is Layilin (374 aa).

The first 24 residues, 1-24 (MQPGPALQAVLLAVLLSEPRSSKG), serve as a signal peptide directing secretion. Over 25-221 (RLLSGQLVCR…TKETFKESRE (197 aa)) the chain is Extracellular. The C-type lectin domain maps to 37 to 177 (TRRPCYKVIY…CNMKNNFICK (141 aa)). Intrachain disulfides connect C63–C176 and C142–C168. An N-linked (GlcNAc...) asparagine glycan is attached at N109. A disordered region spans residues 184 to 212 (STTPSIRPGGEATEPPTPVLPEETQKEDT). Residues 222–242 (AALNLAYILIPSIPLFLLLVV) traverse the membrane as a helical segment. Over 243–374 (TSAACWVWIC…SGWVENEIYY (132 aa)) the chain is Cytoplasmic. 2 positions are modified to phosphoserine: S279 and S292. The interaction with NF2 stretch occupies residues 323–367 (DYDNMAVNPSESGFVTLASMESGFVTNDIYEFSPDRMGRSKESGW). The interaction with TLN1 stretch occupies residues 330 to 374 (NPSESGFVTLASMESGFVTNDIYEFSPDRMGRSKESGWVENEIYY). 5 consecutive repeat copies span residues 333-337 (ESGFV), 343-347 (ESGFV), 349-352 (NDIY), 364-368 (ESGWV), and 370-373 (NEIY). The 3 X 5 AA repeats of E-S-G-X-V stretch occupies residues 333–368 (ESGFVTLASMESGFVTNDIYEFSPDRMGRSKESGWV). Residues 349–373 (NDIYEFSPDRMGRSKESGWVENEIY) form a 2 X 4 AA repeats of N-X-I-Y region.

In terms of assembly, interacts with NF2 and RDX. Interacts with TLN1. In terms of tissue distribution, widely expressed. Abundant in the ovary.

The protein resides in the membrane. Functionally, receptor for hyaluronate. The protein is Layilin (LAYN) of Cricetulus griseus (Chinese hamster).